Reading from the N-terminus, the 278-residue chain is UPF0276 protein Sama_1305 (278 aa).

The protein belongs to the UPF0276 family.

This chain is UPF0276 protein Sama_1305, found in Shewanella amazonensis (strain ATCC BAA-1098 / SB2B).